Reading from the N-terminus, the 810-residue chain is Transmembrane channel-like protein 6 (810 aa).

The disordered stretch occupies residues 1 to 26; the sequence is MAQSLALALDVPETTGDEGLEPSPYE. The Lumenal segment spans residues 1–205; it reads MAQSLALALD…GAFSCCSRLR (205 aa). Residues 15–26 are compositionally biased toward acidic residues; sequence TGDEGLEPSPYE. Thr-88 carries the phosphothreonine modification. Arg-93 is modified (omega-N-methylarginine). N-linked (GlcNAc...) asparagine glycosylation occurs at Asn-102. A Phosphothreonine modification is found at Thr-104. Ser-136 bears the Phosphoserine mark. Residues 206–226 traverse the membrane as a helical segment; the sequence is YTCMLALHSLGLALLSGLYAA. Residues 227-253 are Cytoplasmic-facing; it reads RPWRYALKQIGGQFGSSVLSYFLFLKT. Residues 254–274 traverse the membrane as a helical segment; sequence LLAFNALMLLPLLAFLVGVQA. At 275-338 the chain is on the lumenal side; sequence AFPPDPAGPV…PRLGSLPYNM (64 aa). An N-linked (GlcNAc...) asparagine glycan is attached at Asn-311. Residues 339–359 traverse the membrane as a helical segment; it reads PLAYLFTMGATFFLTCIILVY. At 360-429 the chain is on the cytoplasmic side; sequence SMSHSFGESY…PRSVCGQLRQ (70 aa). A helical transmembrane segment spans residues 430–450; it reads VVVLGLGWLLCLGSTMGCTVA. Residues 451 to 468 lie on the Lumenal side of the membrane; that stretch reads VLTFSEVMIQRPASGGQG. The helical transmembrane segment at 469–489 threads the bilayer; the sequence is VEALALPLVVSVLNLGASYLF. Over 490–504 the chain is Cytoplasmic; it reads RGLATLERHDSPVLE. Residues 505–525 traverse the membrane as a helical segment; it reads VYMAICRNLILKMAVLGVLCY. The Lumenal segment spans residues 526-552; that stretch reads HWLGRRVATLQGQCWEDFVGQELYRFM. A helical membrane pass occupies residues 553–573; sequence VVDFIFMLLDSLFGELVWRLI. The Cytoplasmic portion of the chain corresponds to 574 to 603; sequence SEKKLKRGQKPEFDIARNVLDLIYGQTLTW. A helical membrane pass occupies residues 604–624; the sequence is LGVLFSPLLPAVQILRLLFLF. Topologically, residues 625–649 are lumenal; sequence HIKKASLMANCQAPRRPWLASHMST. The helical transmembrane segment at 650–670 threads the bilayer; sequence VFLTLLCFPSFLGAAVFLCYA. Over 671–721 the chain is Cytoplasmic; the sequence is VWQVRPSSTCGPFRTLNTMYEAGTVWVRRLEHAGSGASWLPWLHHFLVENT. A helical transmembrane segment spans residues 722–742; it reads FFLFLASALLLAVIYFNIQVV. Residues 743–810 lie on the Lumenal side of the membrane; the sequence is KGQRKVICLL…QKEPCNPRSP (68 aa). Residues 775-810 form a disordered region; it reads EEEGRSRPGRTQDATEPPAWHEDGGDQKEPCNPRSP. The span at 793–810 shows a compositional bias: basic and acidic residues; the sequence is AWHEDGGDQKEPCNPRSP.

Belongs to the TMC family. As to quaternary structure, interacts with TMC8. Interacts and forms a complex with TMC8 and CIB1; the interaction stabilizes each component of the complex. Interacts and forms a complex with TMC8 and SLC30A1/ZNT1; the interaction regulates zinc transport into the ER. Widely expressed. Highly expressed in thymus, lung and spleen. Expressed in lymphocytes and peripheral lymphocytes. Expressed in small and medium dorsal root ganglion (DRG) neurons.

It is found in the endoplasmic reticulum membrane. In terms of biological role, acts as a regulatory protein involved in the regulation of numerous cellular processes. Together with its homolog TMC8/EVER2, forms a complex with calcium-binding protein CIB1 in lymphocytes and keratynocytes where TMC6 and TMC8 stabilize CIB1 and reciprocally. Together with TMC8, also forms a complex with and activates zinc transporter ZNT1 at the ER membrane of keratynocytes, thereby facilitating zinc uptake into the ER. Down-regulates the activity of transcription factors induced by zinc and cytokines. Also plays a role in thermal sensation by inhibiting the M-channel (KCNQ2-KCNQ3 channel) current in primary sensory neurons. In Mus musculus (Mouse), this protein is Transmembrane channel-like protein 6.